Consider the following 417-residue polypeptide: Origin of replication complex subunit 4 (417 aa).

Residue 59–66 (GPRGSGKA) coordinates ATP.

Belongs to the ORC4 family. In terms of assembly, component of the origin recognition complex (ORC) composed of at least ORC1 (ORC1A or ORC1B), ORC2, ORC3, ORC4, ORC5 and ORC6. ORC is regulated in a cell-cycle and development dependent manner. It is sequentially assembled at the exit from anaphase of mitosis and disassembled as cells enter S phase. Interacts directly with ORC1A, ORC2, ORC3, ORC5 and ORC6. As to expression, follow a cell-cycle regulation with a peak at the G1/S-phase. Isoform AtORC4a is expressed at low levels ubiquitously. Isoform AtORC4b is mostly expressed in siliques, flowers and flower buds, and, to a lower exent, in roots, leaves and stems.

The protein resides in the nucleus. In terms of biological role, component of the origin recognition complex (ORC) that binds origins of replication. DNA-binding is ATP-dependent. The specific DNA sequences that define origins of replication have not been identified yet. ORC is required to assemble the pre-replication complex necessary to initiate DNA replication. This chain is Origin of replication complex subunit 4, found in Arabidopsis thaliana (Mouse-ear cress).